Consider the following 204-residue polypeptide: High frequency lysogenization protein HflD homolog (204 aa).

It belongs to the HflD family.

The protein localises to the cytoplasm. Its subcellular location is the cell inner membrane. This chain is High frequency lysogenization protein HflD homolog, found in Stenotrophomonas maltophilia (strain K279a).